A 332-amino-acid chain; its full sequence is Glyceraldehyde-3-phosphate dehydrogenase 2 (332 aa).

NAD(+) is bound by residues 11–12 (RI), aspartate 32, and arginine 77. D-glyceraldehyde 3-phosphate is bound by residues 148–150 (SCT), threonine 179, 208–209 (TG), and arginine 231. The active-site Nucleophile is the cysteine 149. Asparagine 313 is an NAD(+) binding site.

This sequence belongs to the glyceraldehyde-3-phosphate dehydrogenase family. Homotetramer.

It is found in the cytoplasm. The catalysed reaction is D-glyceraldehyde 3-phosphate + phosphate + NAD(+) = (2R)-3-phospho-glyceroyl phosphate + NADH + H(+). It functions in the pathway carbohydrate degradation; glycolysis; pyruvate from D-glyceraldehyde 3-phosphate: step 1/5. This chain is Glyceraldehyde-3-phosphate dehydrogenase 2 (Gapdh2), found in Drosophila pseudoobscura pseudoobscura (Fruit fly).